The sequence spans 301 residues: MLSTENPNSSPLSDSLEFNERHLDSIISSLVTFPDSPSLSISSSFDRVLDHLLSSGDVSVQDQLVDRTLERFSLLLQSTKRCSQKRATLHNSISWFLPSELTVKVFSMVDTKSLMQASACCTMFNNCAMDPLCYFHIDLTKAFKHVDDRVLRTLLNRSGKQLRSLKLGRVDAPGCLFRSSCLPPLILYGNNARRALKLGRDPPGLGSLFTRSCFDPLKLTGNLLTSLHIYSLGFMNMNSFLDPLSACSNLTDLKIVGVNVLLEPILELLARNCCLIEHLFLDNCSQGKTFTWWGFLYFTVA.

The F-box domain maps to 91–146; sequence NSISWFLPSELTVKVFSMVDTKSLMQASACCTMFNNCAMDPLCYFHIDLTKAFKHV.

This chain is F-box protein At4g02733, found in Arabidopsis thaliana (Mouse-ear cress).